A 131-amino-acid polypeptide reads, in one-letter code: Small ribosomal subunit protein uS12c (131 aa).

This sequence belongs to the universal ribosomal protein uS12 family. Part of the 30S ribosomal subunit.

It is found in the plastid. The protein resides in the chloroplast. In terms of biological role, with S4 and S5 plays an important role in translational accuracy. Located at the interface of the 30S and 50S subunits. This Stigeoclonium helveticum (Green alga) protein is Small ribosomal subunit protein uS12c (rps12).